Here is a 247-residue protein sequence, read N- to C-terminus: NAD(P)H-quinone oxidoreductase subunit K, chloroplastic (247 aa).

Residues cysteine 61, cysteine 62, cysteine 126, and cysteine 157 each coordinate [4Fe-4S] cluster.

Belongs to the complex I 20 kDa subunit family. As to quaternary structure, NDH is composed of at least 16 different subunits, 5 of which are encoded in the nucleus. The cofactor is [4Fe-4S] cluster.

It is found in the plastid. Its subcellular location is the chloroplast thylakoid membrane. It catalyses the reaction a plastoquinone + NADH + (n+1) H(+)(in) = a plastoquinol + NAD(+) + n H(+)(out). The enzyme catalyses a plastoquinone + NADPH + (n+1) H(+)(in) = a plastoquinol + NADP(+) + n H(+)(out). In terms of biological role, NDH shuttles electrons from NAD(P)H:plastoquinone, via FMN and iron-sulfur (Fe-S) centers, to quinones in the photosynthetic chain and possibly in a chloroplast respiratory chain. The immediate electron acceptor for the enzyme in this species is believed to be plastoquinone. Couples the redox reaction to proton translocation, and thus conserves the redox energy in a proton gradient. This Anthoceros angustus (Hornwort) protein is NAD(P)H-quinone oxidoreductase subunit K, chloroplastic.